A 473-amino-acid polypeptide reads, in one-letter code: GTPase Der (473 aa).

EngA-type G domains are found at residues 5–170 (PVVA…PNQE) and 178–351 (LKLA…QSSM). GTP is bound by residues 11 to 18 (GRPNVGKS), 58 to 62 (DTGGI), 123 to 126 (NKVD), 184 to 191 (GRPNVGKS), 231 to 235 (DTAGV), and 296 to 299 (NKWD). Positions 352–436 (FEVSTNRLTQ…PLNVVFKLNE (85 aa)) constitute a KH-like domain. A compositionally biased stretch (polar residues) spans 438-454 (PYANKSDTPTKAKTQQL). The tract at residues 438 to 473 (PYANKSDTPTKAKTQQLRQRERNRAQKFTTKDKKPR) is disordered. Residues 455–473 (RQRERNRAQKFTTKDKKPR) are compositionally biased toward basic and acidic residues.

The protein belongs to the TRAFAC class TrmE-Era-EngA-EngB-Septin-like GTPase superfamily. EngA (Der) GTPase family. In terms of assembly, associates with the 50S ribosomal subunit.

Functionally, GTPase that plays an essential role in the late steps of ribosome biogenesis. The chain is GTPase Der from Psychrobacter arcticus (strain DSM 17307 / VKM B-2377 / 273-4).